The chain runs to 395 residues: 8-amino-7-oxononanoate synthase (395 aa).

R24 contributes to the substrate binding site. 111-112 (GF) contacts pyridoxal 5'-phosphate. H136 lines the substrate pocket. Pyridoxal 5'-phosphate is bound by residues S184, 209 to 212 (DDAH), and 240 to 243 (TLSK). K243 is modified (N6-(pyridoxal phosphate)lysine). Residue T357 coordinates substrate.

The protein belongs to the class-II pyridoxal-phosphate-dependent aminotransferase family. BioF subfamily. As to quaternary structure, homodimer. It depends on pyridoxal 5'-phosphate as a cofactor.

It catalyses the reaction 6-carboxyhexanoyl-[ACP] + L-alanine + H(+) = (8S)-8-amino-7-oxononanoate + holo-[ACP] + CO2. It functions in the pathway cofactor biosynthesis; biotin biosynthesis. Functionally, catalyzes the decarboxylative condensation of pimeloyl-[acyl-carrier protein] and L-alanine to produce 8-amino-7-oxononanoate (AON), [acyl-carrier protein], and carbon dioxide. The polypeptide is 8-amino-7-oxononanoate synthase (Alkaliphilus metalliredigens (strain QYMF)).